The sequence spans 159 residues: MEQNHQNLQSQFFIEHILQILPHRYPMLLIDRVVELEANKKIVAYKNITFNEDVFNGHFPDKPIFPGVLIVEGMAQTGGFLAFTSLWGFDPEIAKTKIVYFMTIDKVKFRIPVTPGDRLEYHLEVLKHKGMIWQVGGTAQVDGKVVAEAELKAMIAERD.

H58 is a catalytic residue.

Belongs to the thioester dehydratase family. FabZ subfamily.

The protein localises to the cytoplasm. The catalysed reaction is a (3R)-hydroxyacyl-[ACP] = a (2E)-enoyl-[ACP] + H2O. In terms of biological role, involved in unsaturated fatty acids biosynthesis. Catalyzes the dehydration of short chain beta-hydroxyacyl-ACPs and long chain saturated and unsaturated beta-hydroxyacyl-ACPs. This is 3-hydroxyacyl-[acyl-carrier-protein] dehydratase FabZ from Helicobacter pylori (strain Shi470).